Here is a 135-residue protein sequence, read N- to C-terminus: Glutaredoxin-C4 (135 aa).

One can recognise a Glutaredoxin domain in the interval 32–132; the sequence is ADFVKKTISS…KLLGVSGNKE (101 aa). Cysteines 52 and 55 form a disulfide.

It belongs to the glutaredoxin family. CPYC subfamily.

It localises to the cytoplasm. Functionally, has a glutathione-disulfide oxidoreductase activity in the presence of NADPH and glutathione reductase. Reduces low molecular weight disulfides and proteins. The chain is Glutaredoxin-C4 (GRXC4) from Arabidopsis thaliana (Mouse-ear cress).